Here is a 301-residue protein sequence, read N- to C-terminus: Runt-related transcription factor rnt-1 (301 aa).

The Runt domain maps to Asn-10–Ile-138. 3 interaction with DNA regions span residues Arg-40 to Ser-44, Arg-95 to Gly-103, and Val-128 to Arg-137. Positions 99 and 130 each coordinate chloride. Positions Pro-237–Phe-301 are disordered. Ser-255 is modified (phosphoserine). Over residues Ser-255 to Ser-276 the composition is skewed to polar residues. Low complexity predominate over residues Val-285 to Phe-301.

As to quaternary structure, interacts with CBFbeta homolog bro-1; acts to increase the affinity and specificity of interaction of rnt-1 with DNA. Interacts with TGF-beta pathway protein sma-4. In terms of processing, may be ubiquitinated in order to be targeted for proteasome-mediated degradation in intestinal cells. May be phosphorylated by members of the p38 MAP kinase pathway. As to expression, expressed in the intestine.

The protein localises to the nucleus. Its function is as follows. Transcription factor. Binds to regulatory DNA sequences in order to modulate transcription; negatively autoregulates its own expression, perhaps dependent upon CBF beta homolog bro-1. Promotes proliferation, and prevents differentiation, of seam cells, a stem cell-like lineage, acting in concert with bro-1. Required for controlling cell proliferation in the seam cells, perhaps by repressing expression of cyclin-dependent kinase inhibitor cki-1. Inhibition of seam cell differentiation is regulated by rnt-1 and bro-1, perhaps acting upstream of pop-1, by antagonizing pop-1 repressor function. Required for asymmetrical cell divisions in the lineage derived from a posterior embryonic seam cell, the T blast cell, and for asymmetric expression of zinc finger protein tlp-1. Regulates growth and male tail development. Involved in the oxidative stress response, perhaps downstream of the p38 MAP kinase pathway, and acting as part of a negative feedback loop via a transcriptional target gene, tyrosine-protein phosphatase vhp-1. Positively modulates dopaminergic signaling in a non-cell autonomous manner. May be involved in TGF-beta signaling. The polypeptide is Runt-related transcription factor rnt-1 (Caenorhabditis elegans).